Consider the following 490-residue polypeptide: 3-octaprenyl-4-hydroxybenzoate carboxy-lyase (490 aa).

Asparagine 172 contacts Mn(2+). Prenylated FMN-binding positions include 175 to 177, 189 to 191, and 194 to 195; these read IYR, RWL, and RG. Glutamate 238 lines the Mn(2+) pocket. The active-site Proton donor is the aspartate 287.

Belongs to the UbiD family. Homohexamer. The cofactor is prenylated FMN. Mn(2+) is required as a cofactor.

It localises to the cell membrane. The catalysed reaction is a 4-hydroxy-3-(all-trans-polyprenyl)benzoate + H(+) = a 2-(all-trans-polyprenyl)phenol + CO2. Its pathway is cofactor biosynthesis; ubiquinone biosynthesis. Catalyzes the decarboxylation of 3-octaprenyl-4-hydroxy benzoate to 2-octaprenylphenol, an intermediate step in ubiquinone biosynthesis. This Saccharophagus degradans (strain 2-40 / ATCC 43961 / DSM 17024) protein is 3-octaprenyl-4-hydroxybenzoate carboxy-lyase.